The sequence spans 291 residues: Putative butyrophilin-like protein 10 pseudogene (291 aa).

Residues 1–26 (MAVTCDPEAFLSICFVTLVFLQLPLA) form the signal peptide. The Ig-like V-type domain occupies 27–146 (SIWKADFDVT…GEATVQVQVA (120 aa)). Residues 27-254 (SIWKADFDVT…RSSQFTAWKA (228 aa)) are Extracellular-facing. An intrachain disulfide couples C54 to C128. The N-linked (GlcNAc...) asparagine glycan is linked to N59. A helical membrane pass occupies residues 255–275 (ALPLILVAMGLVIAGGICIFW). Residues 276 to 291 (KRQREKNKASLEEERE) lie on the Cytoplasmic side of the membrane.

This sequence belongs to the immunoglobulin superfamily. BTN/MOG family.

The protein resides in the membrane. This chain is Putative butyrophilin-like protein 10 pseudogene, found in Homo sapiens (Human).